The following is a 183-amino-acid chain: Mast cell-expressed membrane protein 1 (183 aa).

The interval 1-26 (MHASASQDKNRRKPGHDEGAHNPDYE) is disordered. The Cytoplasmic portion of the chain corresponds to 1–70 (MHASASQDKN…PPWLYRTIMM (70 aa)). Basic and acidic residues predominate over residues 15–24 (GHDEGAHNPD). Residues 71–91 (LYVLLALVFLSCIVLSALVLV) form a helical; Signal-anchor for type II membrane protein membrane-spanning segment. Residues 92 to 183 (KNSEMSKELW…EKKAQPQPST (92 aa)) lie on the Extracellular side of the membrane. The N-linked (GlcNAc...) asparagine glycan is linked to Asn-109.

The protein resides in the membrane. This is Mast cell-expressed membrane protein 1 from Mus musculus (Mouse).